The sequence spans 143 residues: Endoribonuclease YbeY (143 aa).

Zn(2+)-binding residues include H109, H113, and H119.

The protein belongs to the endoribonuclease YbeY family. The cofactor is Zn(2+).

It localises to the cytoplasm. In terms of biological role, single strand-specific metallo-endoribonuclease involved in late-stage 70S ribosome quality control and in maturation of the 3' terminus of the 16S rRNA. This chain is Endoribonuclease YbeY, found in Leptospira borgpetersenii serovar Hardjo-bovis (strain JB197).